Consider the following 365-residue polypeptide: Glycerol dehydrogenase (365 aa).

NAD(+) is bound by residues D37, G94, K95, T116, and S119. D121 is a binding site for glycerol. NAD(+)-binding residues include S125, L127, and Y131. Zn(2+)-binding residues include D171, H254, and H271. H254 lines the glycerol pocket.

The protein belongs to the iron-containing alcohol dehydrogenase family. Zn(2+) is required as a cofactor.

It catalyses the reaction glycerol + NAD(+) = dihydroxyacetone + NADH + H(+). It participates in polyol metabolism; glycerol fermentation; glycerone phosphate from glycerol (oxidative route): step 1/2. Its function is as follows. Catalyzes the NAD-dependent oxidation of glycerol to dihydroxyacetone (glycerone). Allows microorganisms to utilize glycerol as a source of carbon under anaerobic conditions. This Pseudomonas putida (Arthrobacter siderocapsulatus) protein is Glycerol dehydrogenase (gldA).